The sequence spans 108 residues: Thioredoxin (108 aa).

The region spanning 2 to 108 is the Thioredoxin domain; it reads NKIIELTDQN…LKEFLDENIN (107 aa). The cysteines at positions 32 and 35 are disulfide-linked.

It belongs to the thioredoxin family.

Functionally, participates in various redox reactions through the reversible oxidation of its active center dithiol to a disulfide and catalyzes dithiol-disulfide exchange reactions. This Buchnera aphidicola subsp. Acyrthosiphon pisum (strain APS) (Acyrthosiphon pisum symbiotic bacterium) protein is Thioredoxin (trxA).